We begin with the raw amino-acid sequence, 350 residues long: Peroxidase 10 (350 aa).

An N-terminal signal peptide occupies residues 1 to 27 (MDHKMSMYLFVSYLAIFTLFFKGFVSS). Cystine bridges form between Cys57–Cys137, Cys90–Cys95, Cys143–Cys346, and Cys222–Cys256. The active-site Proton acceptor is the His88. Ca(2+) is bound by residues Asp89, Val92, Gly94, Asp96, and Ser98. N-linked (GlcNAc...) asparagine glycosylation is present at Asn102. Pro185 contacts substrate. N-linked (GlcNAc...) asparagine glycosylation is present at Asn193. His215 is a binding site for heme b. Residue Thr216 participates in Ca(2+) binding. Asp270, Ser273, and Asp278 together coordinate Ca(2+).

It belongs to the peroxidase family. Classical plant (class III) peroxidase subfamily. Requires heme b as cofactor. Ca(2+) is required as a cofactor. As to expression, expressed in the whole plant, with the highest expression in roots.

It localises to the secreted. It carries out the reaction 2 a phenolic donor + H2O2 = 2 a phenolic radical donor + 2 H2O. In terms of biological role, removal of H(2)O(2), oxidation of toxic reductants, biosynthesis and degradation of lignin, suberization, auxin catabolism, response to environmental stresses such as wounding, pathogen attack and oxidative stress. These functions might be dependent on each isozyme/isoform in each plant tissue. The protein is Peroxidase 10 (PER10) of Arabidopsis thaliana (Mouse-ear cress).